A 252-amino-acid chain; its full sequence is Thiazole synthase (252 aa).

Lysine 98 serves as the catalytic Schiff-base intermediate with DXP. 1-deoxy-D-xylulose 5-phosphate is bound by residues glycine 159, 185–186 (AG), and 207–208 (AT).

It belongs to the ThiG family. In terms of assembly, homotetramer. Forms heterodimers with either ThiH or ThiS.

Its subcellular location is the cytoplasm. The enzyme catalyses [ThiS sulfur-carrier protein]-C-terminal-Gly-aminoethanethioate + 2-iminoacetate + 1-deoxy-D-xylulose 5-phosphate = [ThiS sulfur-carrier protein]-C-terminal Gly-Gly + 2-[(2R,5Z)-2-carboxy-4-methylthiazol-5(2H)-ylidene]ethyl phosphate + 2 H2O + H(+). The protein operates within cofactor biosynthesis; thiamine diphosphate biosynthesis. Catalyzes the rearrangement of 1-deoxy-D-xylulose 5-phosphate (DXP) to produce the thiazole phosphate moiety of thiamine. Sulfur is provided by the thiocarboxylate moiety of the carrier protein ThiS. In vitro, sulfur can be provided by H(2)S. The sequence is that of Thiazole synthase from Mycolicibacterium smegmatis (strain ATCC 700084 / mc(2)155) (Mycobacterium smegmatis).